Here is a 104-residue protein sequence, read N- to C-terminus: uncharacterized protein (104 aa).

Positions 24–69 form a coiled coil; the sequence is VIKQIIEKYNDKVKELDTLKNQYQNLQQDYENLKQQVSLQRQTMIS.

This is an uncharacterized protein from Acanthamoeba polyphaga mimivirus (APMV).